Here is a 658-residue protein sequence, read N- to C-terminus: Protein teflon (658 aa).

A C2H2-type 1 zinc finger spans residues 33-56; sequence LYCHFCRDLFTQLPEFLRHLQSNH. Residues 80–131 form a disordered region; the sequence is DKAHEDAQSAGHNSSSGDSRSLMNSEDSRAIDGSEENSDNSPVKPEQIGKQN. Residues 89-104 show a composition bias toward polar residues; it reads AGHNSSSGDSRSLMNS. 2 C2H2-type zinc fingers span residues 608–630 and 634–657; these read YFCKWCDDIFILKKEYLKHLISH and FQCTKCIKVFKYKGYYEKHLRNAH.

Belongs to the Teflon family.

The protein localises to the nucleus. The protein resides in the chromosome. Functionally, specifically required in males for proper segregation of autosomal bivalents at meiosis I. Expression is required in the male germ line prior to spermatocyte stage S4. May have a role as a bridging molecule maintaining adhesion to hold autosome bivalents together via heterochromatic connections. The polypeptide is Protein teflon (Drosophila simulans (Fruit fly)).